We begin with the raw amino-acid sequence, 571 residues long: Hemagglutinin-neuraminidase (571 aa).

Over 1–26 (MDRAVNRVVLENEEREAKNTWRLVFR) the chain is Intravirion. A helical transmembrane segment spans residues 27-47 (IAVLLLMVMTLAISAAALVYS). At 48-571 (MGASTPRDLA…LVEILKDDRV (524 aa)) the chain is on the virion surface side. Asn119 carries N-linked (GlcNAc...) asparagine; by host glycosylation. Residues 124–152 (GEPVHDPDYIGGIGKELIVDDISDVTSFY) are important for interaction with fusion/F protein. 3 disulfide bridges follow: Cys172–Cys196, Cys186–Cys247, and Cys238–Cys251. The segment at 234-239 (NRKSCS) is involved in neuraminidase activity. N-linked (GlcNAc...) asparagine; by host glycosylation is found at Asn341 and Asn433. Disulfide bonds link Cys344/Cys461 and Cys455/Cys465. Asn481, Asn508, and Asn538 each carry an N-linked (GlcNAc...) asparagine; by host glycan. A disulfide bond links Cys531 and Cys542.

The protein belongs to the paramyxoviruses hemagglutinin-neuraminidase family. As to quaternary structure, homotetramer; composed of disulfide-linked homodimers. Interacts with F protein trimer. Interacts with host CG-1B; this interaction inhibits viral adsorption and replication rather than internalization.

It localises to the virion membrane. The protein localises to the host cell membrane. The enzyme catalyses Hydrolysis of alpha-(2-&gt;3)-, alpha-(2-&gt;6)-, alpha-(2-&gt;8)- glycosidic linkages of terminal sialic acid residues in oligosaccharides, glycoproteins, glycolipids, colominic acid and synthetic substrates.. Functionally, mediates the viral entry into the host cell together with fusion/F protein. Attaches the virus to sialic acid-containing cell receptors and thereby initiates infection. Binding of HN protein to the receptor induces a conformational change that allows the F protein to trigger virion/cell membranes fusion. In terms of biological role, neuraminidase activity ensures the efficient spread of the virus by dissociating the mature virions from the neuraminic acid containing glycoproteins. The protein is Hemagglutinin-neuraminidase (HN) of Gallus gallus (Chicken).